A 638-amino-acid chain; its full sequence is Plasma kallikrein (638 aa).

A signal peptide spans 1–19; the sequence is MILFKQVGYFVSLFATVSC. Apple domains are found at residues 21-104, 111-194, 201-284, and 292-375; these read CLSQ…LKQC, CHQD…LKSC, CPMD…LFTC, and CHFK…LRLC. Disulfide bonds link cysteine 21-cysteine 104, cysteine 47-cysteine 77, cysteine 51-cysteine 57, cysteine 111-cysteine 194, cysteine 137-cysteine 166, cysteine 141-cysteine 147, cysteine 201-cysteine 284, cysteine 227-cysteine 256, cysteine 231-cysteine 237, cysteine 292-cysteine 375, cysteine 318-cysteine 347, cysteine 322-cysteine 328, cysteine 340-cysteine 345, cysteine 383-cysteine 503, cysteine 419-cysteine 435, cysteine 517-cysteine 584, cysteine 548-cysteine 563, and cysteine 574-cysteine 602. N-linked (GlcNAc...) asparagine glycosylation occurs at asparagine 127. Asparagine 215 is a glycosylation site (N-linked (GlcNAc...) asparagine). An N-linked (GlcNAc...) asparagine glycan is attached at asparagine 308. The region spanning 391–626 is the Peptidase S1 domain; it reads IVGGTNSSLG…YIDWILEKIQ (236 aa). N-linked (GlcNAc...) asparagine glycosylation occurs at asparagine 396. The active-site Charge relay system is the histidine 434. Asparagine 453 is a glycosylation site (N-linked (GlcNAc...) asparagine). Residue aspartate 483 is the Charge relay system of the active site. The N-linked (GlcNAc...) asparagine glycan is linked to asparagine 494. Serine 578 (charge relay system) is an active-site residue.

The protein belongs to the peptidase S1 family. Plasma kallikrein subfamily. In terms of assembly, forms a heterodimer with SERPINA5. The zymogen is activated by factor XIIa, which cleaves the molecule into a light chain, which contains the active site, and a heavy chain, which associates with HMW kininogen. These chains are linked by one or more disulfide bonds.

It is found in the secreted. It carries out the reaction Cleaves selectively Arg-|-Xaa and Lys-|-Xaa bonds, including Lys-|-Arg and Arg-|-Ser bonds in (human) kininogen to release bradykinin.. Inhibited by SERPINA5. In terms of biological role, the enzyme cleaves Lys-Arg and Arg-Ser bonds. It activates, in a reciprocal reaction, factor XII after its binding to a negatively charged surface. It also releases bradykinin from HMW kininogen and may also play a role in the renin-angiotensin system by converting prorenin into renin. This is Plasma kallikrein (Klkb1) from Rattus norvegicus (Rat).